We begin with the raw amino-acid sequence, 200 residues long: Cuticle protein 21.3 (200 aa).

A run of 10 repeats spans residues 98-101 (AAPA), 104-107 (AAPA), 116-119 (AAPA), 121-124 (AAPA), 133-136 (AAPA), 154-157 (AAPA), 166-169 (AAPA), 178-181 (AAPA), 184-187 (AAPA), and 196-199 (AAPA).

Component of the cuticle of migratory locust which contains more than 100 different structural proteins. This Locusta migratoria (Migratory locust) protein is Cuticle protein 21.3.